The sequence spans 425 residues: Probable aminotransferase tcpI (425 aa).

An N6-(pyridoxal phosphate)lysine modification is found at Lys-256.

This sequence belongs to the class-I pyridoxal-phosphate-dependent aminotransferase family. Requires pyridoxal 5'-phosphate as cofactor.

It participates in secondary metabolite biosynthesis. Its function is as follows. Probable aminotransferase; part of the gene cluster that mediates the biosynthesis of an unusual class of epipolythiodioxopiperazines (ETPs) lacking the reactive thiol group important for toxicity. Firstly, L-tyrosine is prenylated by tcpD, before undergoing condensation with L-glycine in a reaction catalyzed by the NRPS tcpP leading to the diketopiperazine (DKP) backbone. Afterwards the alpha-carbon of tyrosine is oxidized by the cytochrome P450 tcpC to form a hydroxyl group. However, in contrast other ETP biosynthesis pathways studied so far, tcpC is not able to bishydroxylate the DKP at both alpha-carbon positions, but hydroxylates the alpha-carbon of the tyrosine part and the nitrogen of the glycine part. The next steps involve an alpha,beta-elimination reaction catalyzed by tcpI, a methylation by the methyltransferase tcpN the action of the four enzyme cascade tcpG/K/J/I. Due to a dysfunctional cytochrome P450 monooxygenase tcpC, the pathway leads to the biosynthesis of probable non-toxic metabolites lacking the reactive thiol group. This Claviceps purpurea (strain 20.1) (Ergot fungus) protein is Probable aminotransferase tcpI.